The following is a 371-amino-acid chain: S-adenosylmethionine:tRNA ribosyltransferase-isomerase (371 aa).

This sequence belongs to the QueA family. Monomer.

The protein resides in the cytoplasm. It catalyses the reaction 7-aminomethyl-7-carbaguanosine(34) in tRNA + S-adenosyl-L-methionine = epoxyqueuosine(34) in tRNA + adenine + L-methionine + 2 H(+). Its pathway is tRNA modification; tRNA-queuosine biosynthesis. Transfers and isomerizes the ribose moiety from AdoMet to the 7-aminomethyl group of 7-deazaguanine (preQ1-tRNA) to give epoxyqueuosine (oQ-tRNA). This is S-adenosylmethionine:tRNA ribosyltransferase-isomerase from Rickettsia akari (strain Hartford).